A 335-amino-acid chain; its full sequence is MHLIIPDSYDPKLSVKDTQRAIRYIRETFQDEFGAQLNLSRLSAPMFVEKSTGLNDNLNGIEQPVSFTMQDMGDSQIEIVHSLAKWKRVALKRYGFNLHEGLYTNMNAIRKDEDLDNFHSAYVDQWDWEKVITKEERTLDTLKQTVRQIFKVIKHMEHEVWYKFPEAVHHLPDKIHFITTQELEDRFPDLTPRERENAITKELGCVFLMQIGGALKSGKRHDGRAPDYDDWQLNGDILFWYEPLKQAIEISSMGIRVDAESMQRQLKIADAEDRLSLPYHQMVLHEEVPFTIGGGIGQSRLCMLLLGKAHVGEVQAALWPQAMIDQCEAANIHLL.

It belongs to the class-II aminoacyl-tRNA synthetase family. AsnA subfamily.

It localises to the cytoplasm. The enzyme catalyses L-aspartate + NH4(+) + ATP = L-asparagine + AMP + diphosphate + H(+). The protein operates within amino-acid biosynthesis; L-asparagine biosynthesis; L-asparagine from L-aspartate (ammonia route): step 1/1. The sequence is that of Aspartate--ammonia ligase from Levilactobacillus brevis (strain ATCC 367 / BCRC 12310 / CIP 105137 / JCM 1170 / LMG 11437 / NCIMB 947 / NCTC 947) (Lactobacillus brevis).